Reading from the N-terminus, the 862-residue chain is FAS1 domain-containing protein YLR001C (862 aa).

An N-terminal signal peptide occupies residues 1 to 23 (MNMAIQTIKYIFWLLPILGLTQA). The Vacuolar portion of the chain corresponds to 24–762 (LLQNPGDDFP…KYHLRLPGIA (739 aa)). Positions 34 to 162 (FSTVIDILSE…ASLQGINNLL (129 aa)) constitute an FAS1 1 domain. Asn68, Asn112, Asn152, Asn200, Asn291, Asn333, Asn450, Asn521, Asn542, Asn569, Asn663, Asn679, and Asn688 each carry an N-linked (GlcNAc...) asparagine glycan. 2 consecutive FAS1 domains span residues 463-604 (PGDL…DQLD) and 606-744 (PVDL…DKPI). Residues 763–783 (VGFGVIIGVTIAISLLFCIII) traverse the membrane as a helical segment. At 784–862 (TRGGKVKDKN…QKGGRSVSTS (79 aa)) the chain is on the cytoplasmic side.

Its subcellular location is the vacuole membrane. This chain is FAS1 domain-containing protein YLR001C, found in Saccharomyces cerevisiae (strain ATCC 204508 / S288c) (Baker's yeast).